A 1361-amino-acid polypeptide reads, in one-letter code: DNA-directed RNA polymerase subunit beta (1361 aa).

This sequence belongs to the RNA polymerase beta chain family. In terms of assembly, the RNAP catalytic core consists of 2 alpha, 1 beta, 1 beta' and 1 omega subunit. When a sigma factor is associated with the core the holoenzyme is formed, which can initiate transcription.

It carries out the reaction RNA(n) + a ribonucleoside 5'-triphosphate = RNA(n+1) + diphosphate. Its function is as follows. DNA-dependent RNA polymerase catalyzes the transcription of DNA into RNA using the four ribonucleoside triphosphates as substrates. The sequence is that of DNA-directed RNA polymerase subunit beta from Dichelobacter nodosus (strain VCS1703A).